Consider the following 171-residue polypeptide: 3-hydroxydecanoyl-[acyl-carrier-protein] dehydratase (171 aa).

His-70 is an active-site residue.

This sequence belongs to the thioester dehydratase family. FabA subfamily. Homodimer.

It is found in the cytoplasm. It catalyses the reaction a (3R)-hydroxyacyl-[ACP] = a (2E)-enoyl-[ACP] + H2O. The catalysed reaction is (3R)-hydroxydecanoyl-[ACP] = (2E)-decenoyl-[ACP] + H2O. The enzyme catalyses (2E)-decenoyl-[ACP] = (3Z)-decenoyl-[ACP]. It participates in lipid metabolism; fatty acid biosynthesis. In terms of biological role, necessary for the introduction of cis unsaturation into fatty acids. Catalyzes the dehydration of (3R)-3-hydroxydecanoyl-ACP to E-(2)-decenoyl-ACP and then its isomerization to Z-(3)-decenoyl-ACP. Can catalyze the dehydratase reaction for beta-hydroxyacyl-ACPs with saturated chain lengths up to 16:0, being most active on intermediate chain length. This is 3-hydroxydecanoyl-[acyl-carrier-protein] dehydratase from Stenotrophomonas maltophilia (strain K279a).